The sequence spans 333 residues: Antimicrobial peptides (333 aa).

Residues 1-23 (MVQKGVVFGVLLILFICSTLTSA) form the signal peptide. A disordered region spans residues 23-52 (ADSKPNPTKEEEPAKKPDEVSVKSGGPEVS). A propeptide spans 24–54 (DSKPNPTKEEEPAKKPDEVSVKSGGPEVSED) (acidic peptide 1). The segment covering 29–43 (PTKEEEPAKKPDEVS) has biased composition (basic and acidic residues). Gln-55 bears the Pyrrolidone carboxylic acid mark. Intrachain disulfides connect Cys-60-Cys-70 and Cys-61-Cys-74. Positions 75–102 (ANAEEAAAAIPEASEELAQEEAPVYSED) are cleaved as a propeptide — acidic peptide 2. Gln-103 bears the Pyrrolidone carboxylic acid mark. 2 cysteine pairs are disulfide-bonded: Cys-108/Cys-118 and Cys-109/Cys-122. Positions 123–148 (QNAEEAAAAIPEATEKAQEAPVYSED) are cleaved as a propeptide — acidic peptide 3. Position 149 is a pyrrolidone carboxylic acid (Gln-149). Intrachain disulfides connect Cys-154–Cys-164 and Cys-155–Cys-168. A propeptide spans 169-196 (QNAEEAAAAVAIPEASEKAQEGPVYSED) (acidic peptide 4). Residue Gln-197 is modified to Pyrrolidone carboxylic acid. Disulfide bonds link Cys-202–Cys-212 and Cys-203–Cys-216. The propeptide at 217-232 (SNAADEVATPEDVEPG) is acidic peptide 5. Gln-233 is subject to Pyrrolidone carboxylic acid. 2 cysteine pairs are disulfide-bonded: Cys-238/Cys-248 and Cys-239/Cys-252. The propeptide at 253–278 (HNAAEEATLKAFEEEAAREQPVYSED) is acidic peptide 6. Gln-279 carries the pyrrolidone carboxylic acid modification. 2 disulfide bridges follow: Cys-284–Cys-294 and Cys-285–Cys-298. Residues 299–333 (QSAEEAAAFQAGEVTASLMLIMFKACPCMGPVPSV) constitute a propeptide, acidic peptide 7.

In terms of processing, the N-terminal of all peptides are blocked. The 4 cysteine residues of all peptides are involved in intrachain disulfide bonds.

It localises to the secreted. Plays a role in the defense of the germinating seed against microorganisms, by inhibiting the growth of a range of filamentous fungi and bacteria, especially Gram-positive bacteria. Not cytotoxic for cultured human cells and are the smallest known plant-derived antimicrobial peptides. Peptide IB-AMP4 has a higher antifungal activity than IB-AMP1. This chain is Antimicrobial peptides (AMP), found in Impatiens balsamina (Balsam).